The chain runs to 193 residues: ATP-dependent Clp protease proteolytic subunit (193 aa).

Residue serine 98 is the Nucleophile of the active site. The active site involves histidine 123.

Belongs to the peptidase S14 family. As to quaternary structure, fourteen ClpP subunits assemble into 2 heptameric rings which stack back to back to give a disk-like structure with a central cavity, resembling the structure of eukaryotic proteasomes.

The protein localises to the cytoplasm. It catalyses the reaction Hydrolysis of proteins to small peptides in the presence of ATP and magnesium. alpha-casein is the usual test substrate. In the absence of ATP, only oligopeptides shorter than five residues are hydrolyzed (such as succinyl-Leu-Tyr-|-NHMec, and Leu-Tyr-Leu-|-Tyr-Trp, in which cleavage of the -Tyr-|-Leu- and -Tyr-|-Trp bonds also occurs).. In terms of biological role, cleaves peptides in various proteins in a process that requires ATP hydrolysis. Has a chymotrypsin-like activity. Plays a major role in the degradation of misfolded proteins. This chain is ATP-dependent Clp protease proteolytic subunit, found in Haemophilus influenzae (strain 86-028NP).